A 440-amino-acid chain; its full sequence is Glucoside xylosyltransferase 1 (440 aa).

Residues 1–6 (MRRYLR) lie on the Cytoplasmic side of the membrane. Residues 7-29 (VVVLCVACGFCSLLYAFSQLAVS) form a helical; Signal-anchor for type II membrane protein membrane-spanning segment. Residues 30-440 (LEEGTGGGGG…DRYARSPKEK (411 aa)) lie on the Lumenal side of the membrane. N-linked (GlcNAc...) asparagine glycans are attached at residues asparagine 173, asparagine 237, and asparagine 278.

The protein belongs to the glycosyltransferase 8 family.

It localises to the membrane. The catalysed reaction is 3-O-(beta-D-glucosyl)-L-seryl-[EGF-like domain protein] + UDP-alpha-D-xylose = 3-O-[alpha-D-xylosyl-(1-&gt;3)-beta-D-glucosyl]-L-seryl-[EGF-like domain protein] + UDP + H(+). In terms of biological role, glycosyltransferase which elongates the O-linked glucose attached to EGF-like repeats in the extracellular domain of Notch proteins by catalyzing the addition of xylose. The polypeptide is Glucoside xylosyltransferase 1 (GXYLT1) (Homo sapiens (Human)).